Reading from the N-terminus, the 150-residue chain is MDIIFVCTGNTCRSPMAEALFKSIAEREGLNVNVRSAGVFASPNGKATPHAVEALFEKHIALNHVSSPLTEELMESADLVLAMTHQHKQIIASQFGRYRDKVFTLKEYVTGSHGDVLDPFGGSIDIYKQTRDELEELLRQLAKQLKKDRR.

Catalysis depends on Cys-7, which acts as the Nucleophile. 8–13 (TGNTCR) provides a ligand contact to substrate. Arg-13 is an active-site residue. Asp-118 serves as the catalytic Proton donor/acceptor.

This sequence belongs to the low molecular weight phosphotyrosine protein phosphatase family.

The catalysed reaction is N(omega)-phospho-L-arginyl-[protein] + H2O = L-arginyl-[protein] + phosphate. With respect to regulation, efficiently inhibited by Cu(2+) ion, Zn(2+) ion, sodium pyrophosphate and N-ethylmaleimide, while the addition of Mg(2+), Ca(2+) or Fe(3+) ions has minimal effect. Inhibited in a competitive manner by vanadate. Its function is as follows. Catalyzes the specific dephosphorylation of phosphoarginine residues in a large number of proteins. Counteracts the protein arginine kinase McsB in vivo. Can dephosphorylate CtsR-P; thus, can restore the DNA-binding ability of the CtsR repressor by reversing the McsB-mediated phosphorylation. Is the only active pArg phosphatase present in B.subtilis. Exhibits almost no activity against pSer, pThr, or pTyr peptides. Appears to play a role in B.subtilis stress resistance. Protein arginine phosphorylation has a physiologically important role and is involved in the regulation of many critical cellular processes, such as protein homeostasis, motility, competence, and stringent and stress responses, by regulating gene expression and protein activity. In Bacillus subtilis (strain 168), this protein is Protein-arginine-phosphatase (ywlE).